We begin with the raw amino-acid sequence, 479 residues long: Cardiolipin synthase A (479 aa).

2 helical membrane passes run 8–28 and 38–58; these read FFGY…LHAV and IAWA…YLVF. PLD phosphodiesterase domains follow at residues 218–245 and 392–419; these read VNFR…GDEY and QPGF…DNRS. Residues His-223, Lys-225, Asp-230, His-397, Lys-399, and Asp-404 contribute to the active site.

This sequence belongs to the phospholipase D family. Cardiolipin synthase subfamily. ClsA sub-subfamily.

It localises to the cell inner membrane. It catalyses the reaction 2 a 1,2-diacyl-sn-glycero-3-phospho-(1'-sn-glycerol) = a cardiolipin + glycerol. Functionally, catalyzes the reversible phosphatidyl group transfer from one phosphatidylglycerol molecule to another to form cardiolipin (CL) (diphosphatidylglycerol) and glycerol. The sequence is that of Cardiolipin synthase A from Pseudomonas putida (strain GB-1).